Here is a 1979-residue protein sequence, read N- to C-terminus: Repetitive organellar protein (1979 aa).

Over residues 1 to 12 (MVFTFKNKKKKK) the composition is skewed to basic residues. 2 disordered regions span residues 1–42 (MVFT…DSWY) and 54–116 (TKYK…NNYS). Composition is skewed to basic and acidic residues over residues 13-24 (EASSDKVSKESF) and 31-42 (NNEKREKSDSWY). Positions 68 to 114 (EDIINNNNNNNNDNNNDNNNDNNNDNNNDNNNDNNNENNNDNNNFNN) are enriched in low complexity. Coiled coils occupy residues 127–366 (DNEL…LKDE), 412–666 (LKVY…EMEL), 693–876 (LKES…KKKQ), 992–1094 (KKKH…YKTI), 1126–1307 (VDKI…MNIK), and 1398–1467 (IANY…LTSQ).

It localises to the host cell membrane. The sequence is that of Repetitive organellar protein from Plasmodium falciparum (isolate 3D7).